Consider the following 401-residue polypeptide: Stearoyl-[acyl-carrier-protein] 9-desaturase 3, chloroplastic (401 aa).

A disordered region spans residues 1–31; that stretch reads MSMALLLTSPAMKQKPAVITSPRRGSSPSRR. Residues 1–35 constitute a chloroplast transit peptide; that stretch reads MSMALLLTSPAMKQKPAVITSPRRGSSPSRRLRVS. Positions 140, 178, 181, 231, 264, and 267 each coordinate Fe cation.

This sequence belongs to the fatty acid desaturase type 2 family. As to quaternary structure, homodimer. Fe(2+) serves as cofactor. Ubiquitously expressed with a preference in leaves, flowers and stems.

The protein resides in the plastid. It is found in the chloroplast. The catalysed reaction is octadecanoyl-[ACP] + 2 reduced [2Fe-2S]-[ferredoxin] + O2 + 2 H(+) = (9Z)-octadecenoyl-[ACP] + 2 oxidized [2Fe-2S]-[ferredoxin] + 2 H2O. Its pathway is lipid metabolism; fatty acid metabolism. In terms of biological role, converts stearoyl-ACP to oleoyl-ACP by introduction of a cis double bond between carbons 9 and 10 of the acyl chain. Also able to convert palmitoyl-ACP to palmitoleoyl-ACP at the C9 position. Exhibits delta-9 palmitoyl-[acyl-carrier-protein] desaturase (PAD) activity. Involved in omega-7 monounsaturated fatty acid biosynthesis, especially in the endosperm oil. The sequence is that of Stearoyl-[acyl-carrier-protein] 9-desaturase 3, chloroplastic (S-ACP-DES3) from Arabidopsis thaliana (Mouse-ear cress).